Consider the following 158-residue polypeptide: Phosphopantetheine adenylyltransferase (158 aa).

Ser-9 provides a ligand contact to substrate. ATP-binding positions include 9-10 (SF) and His-17. The substrate site is built by Lys-41, Thr-73, and Arg-87. ATP-binding positions include 88–90 (GLR), Glu-98, and 122–128 (NQNISSS).

Belongs to the bacterial CoaD family. Homohexamer. It depends on Mg(2+) as a cofactor.

It is found in the cytoplasm. It catalyses the reaction (R)-4'-phosphopantetheine + ATP + H(+) = 3'-dephospho-CoA + diphosphate. It participates in cofactor biosynthesis; coenzyme A biosynthesis; CoA from (R)-pantothenate: step 4/5. Functionally, reversibly transfers an adenylyl group from ATP to 4'-phosphopantetheine, yielding dephospho-CoA (dPCoA) and pyrophosphate. The chain is Phosphopantetheine adenylyltransferase from Leuconostoc citreum (strain KM20).